The sequence spans 477 residues: Diphthine methyltransferase (477 aa).

WD repeat units follow at residues 194–232 (HFEA…TPVF), 236–276 (RHCM…QPLA), and 422–464 (VKTR…ARTL).

It belongs to the DPH7 family. Interacts with INCA1.

It catalyses the reaction diphthine methyl ester-[translation elongation factor 2] + H2O = diphthine-[translation elongation factor 2] + methanol + H(+). The protein operates within protein modification; peptidyl-diphthamide biosynthesis. Functionally, catalyzes the demethylation of diphthine methyl ester to form diphthine, an intermediate diphthamide biosynthesis, a post-translational modification of histidine which occurs in translation elongation factor 2 (EEF2). The chain is Diphthine methyltransferase (Dph7) from Mus musculus (Mouse).